The chain runs to 89 residues: Large ribosomal subunit protein bL27 (89 aa).

Belongs to the bacterial ribosomal protein bL27 family.

This is Large ribosomal subunit protein bL27 from Afipia carboxidovorans (strain ATCC 49405 / DSM 1227 / KCTC 32145 / OM5) (Oligotropha carboxidovorans).